Consider the following 858-residue polypeptide: DNA replication licensing factor mcm4-A (858 aa).

The disordered stretch occupies residues 1 to 125 (MSSPTSTPSR…ARKVKQVDLH (125 aa)). 2 stretches are compositionally biased toward polar residues: residues 54–68 (SPSG…SSPA) and 79–94 (LDLS…SSRV). A C4-type zinc finger spans residues 301–326 (CQVCAFTTRVEIDRGRIAEPSVCKHC). Residues 453-662 (IYERLAAALA…YDRRLAHHLV (210 aa)) enclose the MCM domain. Residues Tyr466, Arg492, Lys511, Ser512, Asn613, Arg638, Arg727, and Glu730 each coordinate ATP. The short motif at 637-640 (SRFD) is the Arginine finger element.

It belongs to the MCM family. In terms of assembly, component of the mcm2-7 complex (RLF-M). The complex forms a toroidal hexameric ring with the proposed subunit order mcm2-mcm6-mcm4-mcm7-mcm3-mcm5. The heterodimer of mmcm3/mcm5 interacts with mcm4, mmcm6, mcm7 and weakly with mcm2. Component of the CMG helicase complex, composed of the mcm2-7 complex, the GINS complex and cdc45. In terms of processing, hyperphosphorylated during mitosis in a mechanism requiring cdc2-cyclin B and other kinases. Undergoes dephosphorylation after exiting mitosis, existing in a partially phosphorylated state in the cytosolic interphase mcm complex which associates with the pre-replication complexes (pre-Rcs). Complete dephosphorylation inactivates the mcm complex, preventing its binding to chromatin. Becomes actively phosphorylated during S phase once the mcm complex is assembled on the chromatin. This chromatin-associated phosphorylation occurs during the activation of the pre-Rcs and is independent of cdks. Phosphorylated by the cdc7-dbf4b complex.

It is found in the nucleus. The protein localises to the chromosome. It catalyses the reaction ATP + H2O = ADP + phosphate + H(+). Acts as a component of the MCM2-7 complex (MCM complex) which is the replicative helicase essential for 'once per cell cycle' DNA replication initiation and elongation in eukaryotic cells. Core component of CDC45-MCM-GINS (CMG) helicase, the molecular machine that unwinds template DNA during replication, and around which the replisome is built. The active ATPase sites in the MCM2-7 ring are formed through the interaction surfaces of two neighboring subunits such that a critical structure of a conserved arginine finger motif is provided in trans relative to the ATP-binding site of the Walker A box of the adjacent subunit. The six ATPase active sites, however, are likely to contribute differentially to the complex helicase activity. This Xenopus laevis (African clawed frog) protein is DNA replication licensing factor mcm4-A (mcm4-a).